Reading from the N-terminus, the 457-residue chain is tRNA-2-methylthio-N(6)-dimethylallyladenosine synthase (457 aa).

The MTTase N-terminal domain occupies 3–120 (KKVYIKTFGC…LPQMIDQRRA (118 aa)). Positions 12, 49, 83, 157, 161, and 164 each coordinate [4Fe-4S] cluster. Positions 143–377 (RVEGPSAFVS…QATIEENVAR (235 aa)) constitute a Radical SAM core domain. Residues 380 to 447 (RSMVGKVERI…PHSLRGELLL (68 aa)) enclose the TRAM domain.

The protein belongs to the methylthiotransferase family. MiaB subfamily. As to quaternary structure, monomer. [4Fe-4S] cluster serves as cofactor.

Its subcellular location is the cytoplasm. It carries out the reaction N(6)-dimethylallyladenosine(37) in tRNA + (sulfur carrier)-SH + AH2 + 2 S-adenosyl-L-methionine = 2-methylsulfanyl-N(6)-dimethylallyladenosine(37) in tRNA + (sulfur carrier)-H + 5'-deoxyadenosine + L-methionine + A + S-adenosyl-L-homocysteine + 2 H(+). In terms of biological role, catalyzes the methylthiolation of N6-(dimethylallyl)adenosine (i(6)A), leading to the formation of 2-methylthio-N6-(dimethylallyl)adenosine (ms(2)i(6)A) at position 37 in tRNAs that read codons beginning with uridine. This chain is tRNA-2-methylthio-N(6)-dimethylallyladenosine synthase, found in Burkholderia ambifaria (strain MC40-6).